The following is a 307-amino-acid chain: Protease HtpX homolog (307 aa).

The helical transmembrane segment at 16–36 (LFMGVGYLIGGAAGAMIALVV) threads the bilayer. H130 contacts Zn(2+). Residue E131 is part of the active site. Residue H134 participates in Zn(2+) binding. 2 helical membrane passes run 145–165 (ITAT…FFGG) and 172–192 (GPGI…AMLV). E201 is a Zn(2+) binding site. Positions 278-307 (AGQSGSATPDPAPAPRGPWNGGAPRRGPWG) are disordered.

Belongs to the peptidase M48B family. The cofactor is Zn(2+).

The protein resides in the cell inner membrane. The polypeptide is Protease HtpX homolog (Nitrobacter hamburgensis (strain DSM 10229 / NCIMB 13809 / X14)).